Reading from the N-terminus, the 360-residue chain is Peptide chain release factor 1 (360 aa).

Gln234 is subject to N5-methylglutamine.

This sequence belongs to the prokaryotic/mitochondrial release factor family. Methylated by PrmC. Methylation increases the termination efficiency of RF1.

It localises to the cytoplasm. Functionally, peptide chain release factor 1 directs the termination of translation in response to the peptide chain termination codons UAG and UAA. The protein is Peptide chain release factor 1 of Clostridium botulinum (strain Alaska E43 / Type E3).